Reading from the N-terminus, the 391-residue chain is Transposase for insertion sequence element IS905 (391 aa).

Belongs to the transposase mutator family.

Functionally, required for the transposition of the insertion element. The chain is Transposase for insertion sequence element IS905 (tra905) from Lactococcus lactis subsp. lactis (strain IL1403) (Streptococcus lactis).